Reading from the N-terminus, the 106-residue chain is uncharacterized protein (106 aa).

It localises to the mitochondrion. This is an uncharacterized protein from Claviceps purpurea (Ergot fungus).